We begin with the raw amino-acid sequence, 324 residues long: Ribosomal RNA small subunit methyltransferase H (324 aa).

S-adenosyl-L-methionine is bound by residues glycine 41–histidine 43, aspartate 60, tyrosine 87, aspartate 111, and glutamine 118.

It belongs to the methyltransferase superfamily. RsmH family.

The protein localises to the cytoplasm. The enzyme catalyses cytidine(1402) in 16S rRNA + S-adenosyl-L-methionine = N(4)-methylcytidine(1402) in 16S rRNA + S-adenosyl-L-homocysteine + H(+). Functionally, specifically methylates the N4 position of cytidine in position 1402 (C1402) of 16S rRNA. This is Ribosomal RNA small subunit methyltransferase H from Nocardia farcinica (strain IFM 10152).